The sequence spans 181 residues: Large ribosomal subunit protein bL17 (181 aa).

A disordered region spans residues 129–181 (AEKSEKSAKTAKAAKAPAKKATAKKASTKAVAAKKKAVKKAQKKDRAASAARA). Positions 145-171 (PAKKATAKKASTKAVAAKKKAVKKAQK) are enriched in basic residues.

The protein belongs to the bacterial ribosomal protein bL17 family. Part of the 50S ribosomal subunit. Contacts protein L32.

The sequence is that of Large ribosomal subunit protein bL17 from Bdellovibrio bacteriovorus (strain ATCC 15356 / DSM 50701 / NCIMB 9529 / HD100).